Here is a 1119-residue protein sequence, read N- to C-terminus: Transient receptor potential cation channel subfamily A member 1 (1119 aa).

Residues 1-718 are Cytoplasmic-facing; it reads MKRSLRKMWR…MKWLAYGFRA (718 aa). ANK repeat units follow at residues 62 to 92, 97 to 126, 130 to 160, 164 to 193, 197 to 226, 238 to 267, 271 to 301, 308 to 337, 341 to 370, 374 to 403, 412 to 441, 445 to 474, 481 to 510, 513 to 542, 547 to 576, and 579 to 609; these read MDTF…EVLH, YGNT…NPNL, NMMA…DVNL, NGNT…KPCK, WGCF…EHGY, GKAT…QIDP, GRCT…SVDI, CHET…DINK, EGRS…QVDI, FGRN…QQIK, DGCT…SIHS, DKKS…DTRL, HGMT…LFLS, NGWT…KCTD, DGNT…DIVL, and QQAS…DECL. 5 disulfides stabilise this stretch: C192/C665, C462/C665, C608/C621, C621/C665, and C633/C856. Residue P394 is modified to 4-hydroxyproline; by EGLN1; transient; in normoxia and hyperoxia. Positions 414 and 421 each coordinate (E)-cinnamaldehyde. Position 621 (C621) interacts with (E)-cinnamaldehyde. C633 is modified (cysteine sulfenic acid (-SOH); transient; in hyperoxia). Positions 641, 665, and 710 each coordinate (E)-cinnamaldehyde. The chain crosses the membrane as a helical span at residues 719–739; sequence HMMNLGSYCLGLIPMTILVVN. The Extracellular segment spans residues 740–767; sequence IKPGMAFNSTGIINETSDHSEILDTTNS. N747 and N753 each carry an N-linked (GlcNAc...) asparagine glycan. A helical membrane pass occupies residues 768 to 793; sequence YLIKTCMILVFLSSIFGYCKEAGQIF. Ca(2+)-binding residues include E788 and Q791. Topologically, residues 794–798 are cytoplasmic; sequence QQKRN. Residues 799–823 form a helical membrane-spanning segment; sequence YFMDISNVLEWIIYTTGIIFVLPLF. Positions 805 and 808 each coordinate Ca(2+). Residues 824–829 lie on the Extracellular side of the membrane; sequence VEIPAH. A helical membrane pass occupies residues 830 to 850; the sequence is LQWQCGAIAVYFYWMNFLLYL. Residues 851-862 lie on the Cytoplasmic side of the membrane; sequence QRFENCGIFIVM. A Cysteine sulfenic acid (-SOH); transient; in hyperoxia modification is found at C856. A helical membrane pass occupies residues 863–892; it reads LEVILKTLLRSTVVFIFLLLAFGLSFYILL. The Extracellular portion of the chain corresponds to 893-901; sequence NLQDPFSSP. Residues 902–922 constitute an intramembrane region (pore-forming); sequence LLSIIQTFSMMLGDINYRESF. The Extracellular segment spans residues 923–933; the sequence is LEPYLRNELAH. The helical transmembrane segment at 934–960 threads the bilayer; that stretch reads PVLSFAQLVSFTIFVPIVLMNLLIGLA. Residues 961-1119 are Cytoplasmic-facing; sequence VGDIAEVQKH…VKAKTHHLEP (159 aa). Residues 1042–1071 are a coiled coil; that stretch reads MEILKQKYRLKDLTFLLEKQHELIKLIIQK. 1046–1052 serves as a coordination point for a 1,2-diacyl-sn-glycero-3-phospho-(1D-myo-inositol); sequence KQKYRLK.

This sequence belongs to the transient receptor (TC 1.A.4) family. As to quaternary structure, homotetramer. Interacts with TMEM100. Interacts with EGLN1. Interacts with the scorpion wasabi receptor toxin at the same site that electrophiles but in a non-covalent manner. Post-translationally, TRPA1 activation by electrophiles occurs though covalent modification of specific cysteine residues in the N-terminal cytoplasmic domain. Hydroxylation is required for TRPA1 activity inhibition in normoxia. In hypoxia, the decrease in oxygen concentration diminishes the activity of the hydroxylase EGLN1, thus relieving TRPA1 from inhibition and ultimately leading to channel activation. In terms of processing, oxidation of Cys-633 and Cys-856 in hyperoxia may override the hydroxylase EGLN1-mediated inhibition, causing TRPA1 activation.

It is found in the cell membrane. It catalyses the reaction Ca(2+)(in) = Ca(2+)(out). The enzyme catalyses Mg(2+)(in) = Mg(2+)(out). It carries out the reaction Na(+)(in) = Na(+)(out). The catalysed reaction is K(+)(in) = K(+)(out). It catalyses the reaction Zn(2+)(in) = Zn(2+)(out). Electrophilic ligands activate the channel by covalent modification of intracellular cysteines; Cys-621 plays a key role in covalent binding of electrophiles. Extracellular Ca(2+) both potentiates and inactivates TRPA1; a rapid potentiation follows by slow desensitization. Activated by increase in intracellular Ca(2+) concentration. Inhibited by the potent blocker of TRPV channels ruthenium red, A-967079, AP-18, HC-030031, and aryl sulfonamide derivative (S)-N-(4-chlorobenzyl)-1-((4-fluorophenyl)sulfonyl)pyrrolidine-2-carboxamide (ASD). Activated by benzyl isothiocyanate (BITC), iodoacetamide, sulfhydryl reactive agent MTSEA, N-methyl maleimide (NMM), N-ethylmaleimide (NEM), and 2-aminoethyldiphenylborinate (2-APB). Also activated by hyperoxia. Acivated by intracellular Zn(2+). TRPA1 activation may critically depend on the presence of small intracellular compounds such as polyphosphates. Its function is as follows. Ligand-activated Ca(2+)-permeable, nonselective cation channel involved in pain detection and possibly also in cold perception, oxygen concentration perception, cough, itch, and inner ear function. Has a relatively high Ca(2+) selectivity, with a preference for divalent over monovalent cations (Ca(2+) &gt; Ba(2+) &gt; Mg(2+) &gt; NH4(+) &gt; Li(+) &gt; K(+)), the influx of cation into the cytoplasm leads to membrane depolarization. Has a central role in the pain response to endogenous inflammatory mediators, such as bradykinin and to a diverse array of irritants. Activated by a large variety of structurally unrelated electrophilic and non-electrophilic chemical compounds, such as allylthiocyanate (AITC) from mustard oil or wasabi, cinnamaldehyde, diallyl disulfide (DADS) from garlic, and acrolein, an environmental irritant. Electrophilic ligands activate TRPA1 by interacting with critical N-terminal Cys residues in a covalent manner. Non-electrophile agonists bind at distinct sites in the transmembrane domain to promote channel activation. Also acts as an ionotropic cannabinoid receptor by being activated by delta(9)-tetrahydrocannabinol (THC), the psychoactive component of marijuana. May be a component for the mechanosensitive transduction channel of hair cells in inner ear, thereby participating in the perception of sounds. The polypeptide is Transient receptor potential cation channel subfamily A member 1 (Homo sapiens (Human)).